We begin with the raw amino-acid sequence, 60 residues long: Ras-related protein Rab-2A (60 aa).

Ser-1, Cys-2, and Thr-19 together coordinate GTP. A Mg(2+)-binding site is contributed by Ser-1. Residues 16-24 carry the Effector region motif; it reads HDLTIGVEF. Thr-19 lines the Mg(2+) pocket.

Belongs to the small GTPase superfamily. Rab family. As to quaternary structure, interacts with PRKCI. Interacts with TRIP11. Interacts (in GTP-bound form) with GARIN1B. Interacts (GTP-bound) with HOPS complex component VPS39; interaction contributes to obtaining a functional HOPS complex that promotes autophagosome-lysosome membrane fusion driven by STX17-SNAP29-VAMP8. May interact with VPS41. Requires Mg(2+) as cofactor. In terms of processing, prenylated. Prenylation is required for association with cellular membranes.

The protein localises to the endoplasmic reticulum-Golgi intermediate compartment membrane. Its subcellular location is the melanosome. It localises to the endoplasmic reticulum membrane. The protein resides in the golgi apparatus membrane. It is found in the cytoplasmic vesicle. The protein localises to the secretory vesicle. Its subcellular location is the acrosome. It localises to the autophagosome membrane. It carries out the reaction GTP + H2O = GDP + phosphate + H(+). With respect to regulation, regulated by guanine nucleotide exchange factors (GEFs) which promote the exchange of bound GDP for free GTP, GTPase activating proteins (GAPs) which increase the GTP hydrolysis activity, and GDP dissociation inhibitors (GDIs) which inhibit the dissociation of the nucleotide from the GTPase. The small GTPases Rab are key regulators of intracellular membrane trafficking, from the formation of transport vesicles to their fusion with membranes. Rabs cycle between active GTP-bound and inactive GDP-bound states. In their active state, drive transport of vesicular carriers from donor organelles to acceptor organelles to regulate the membrane traffic that maintains organelle identity and morphology. RAB2A regulates autophagy by promoting autophagosome-lysosome fusion via recruitment of the HOPS endosomal tethering complex; this process involves autophagosomal RAB2A and lysosomal RAB39A recruitment of HOPS subcomplexes VPS39-VPS11 and VPS41-VPS16-VPS18-VPS33A, respectively, which assemble into a functional complex to mediate membrane tethering and SNAREs-driven membrane fusion. Required for protein transport from the endoplasmic reticulum to the Golgi complex. Regulates the compacted morphology of the Golgi. Together with RAB2B, redundantly required for efficient autophagic flux. The chain is Ras-related protein Rab-2A from Mesocricetus auratus (Golden hamster).